Consider the following 227-residue polypeptide: Cleavage and polyadenylation specificity factor subunit 5 (227 aa).

A Nudix hydrolase domain is found at 76–201 (MRRTVEGVLI…KLVAAPLFEL (126 aa)). The tract at residues 102–104 (TFF) is interaction with RNA. The Nudix box signature appears at 109–130 (GELNPGEDEVEGLKRLMTEILG).

It belongs to the Nudix hydrolase family. CPSF5 subfamily. Homodimer (via N- and C-terminus); binds RNA as homodimer. Component of the cleavage factor Im (CFIm) complex.

The protein localises to the nucleus. It localises to the cytoplasm. In terms of biological role, component of the cleavage factor Im (CFIm) complex that functions as an activator of the pre-mRNA 3'-end cleavage and polyadenylation processing required for the maturation of pre-mRNA into functional mRNAs. CFIm contributes to the recruitment of multiprotein complexes on specific sequences on the pre-mRNA 3'-end, so called cleavage and polyadenylation signals (pA signals). Most pre-mRNAs contain multiple pA signals, resulting in alternative cleavage and polyadenylation (APA) producing mRNAs with variable 3'-end formation. The CFIm complex acts as a key regulator of cleavage and polyadenylation site choice during APA through its binding to 5'-UGUA-3' elements localized in the 3'-untranslated region (UTR) for a huge number of pre-mRNAs. Binds to 5'-UGUA-3' elements localized upstream of pA signals that act as enhancers of pre-mRNA 3'-end processing. The homodimer mediates simultaneous sequence-specific recognition of two 5'-UGUA-3' elements within the pre-mRNA. Plays a role in somatic cell fate transitions and pluripotency by regulating widespread changes in gene expression through an APA-dependent function. Binds to chromatin. Binds to, but does not hydrolyze mono- and di-adenosine nucleotides. In Xenopus laevis (African clawed frog), this protein is Cleavage and polyadenylation specificity factor subunit 5.